The sequence spans 380 residues: Cytochrome b (380 aa).

A run of 4 helical transmembrane segments spans residues 33 to 53 (SGSL…FLAM), 77 to 98 (WLIR…YLHV), 113 to 133 (WNIG…GYVL), and 178 to 198 (FFAF…IHLL). Heme b-binding residues include His83 and His97. Heme b contacts are provided by His182 and His196. Position 201 (His201) interacts with a ubiquinone. 4 helical membrane passes run 226–246 (YKDL…ALFS), 288–308 (LGGV…PILH), 320–340 (LSQI…WIGG), and 347–367 (FVLI…IALP).

The protein belongs to the cytochrome b family. In terms of assembly, the cytochrome bc1 complex contains 3 respiratory subunits (MT-CYB, CYC1 and UQCRFS1), 2 core proteins (UQCRC1 and UQCRC2) and probably 6 low-molecular weight proteins. Requires heme b as cofactor.

It localises to the mitochondrion inner membrane. Functionally, component of the ubiquinol-cytochrome c reductase complex (complex III or cytochrome b-c1 complex) that is part of the mitochondrial respiratory chain. The b-c1 complex mediates electron transfer from ubiquinol to cytochrome c. Contributes to the generation of a proton gradient across the mitochondrial membrane that is then used for ATP synthesis. In Polyodon spathula (North American paddlefish), this protein is Cytochrome b (mt-cyb).